A 178-amino-acid chain; its full sequence is ATP synthase subunit delta (178 aa).

This sequence belongs to the ATPase delta chain family. F-type ATPases have 2 components, F(1) - the catalytic core - and F(0) - the membrane proton channel. F(1) has five subunits: alpha(3), beta(3), gamma(1), delta(1), epsilon(1). F(0) has three main subunits: a(1), b(2) and c(10-14). The alpha and beta chains form an alternating ring which encloses part of the gamma chain. F(1) is attached to F(0) by a central stalk formed by the gamma and epsilon chains, while a peripheral stalk is formed by the delta and b chains.

Its subcellular location is the cell inner membrane. In terms of biological role, f(1)F(0) ATP synthase produces ATP from ADP in the presence of a proton or sodium gradient. F-type ATPases consist of two structural domains, F(1) containing the extramembraneous catalytic core and F(0) containing the membrane proton channel, linked together by a central stalk and a peripheral stalk. During catalysis, ATP synthesis in the catalytic domain of F(1) is coupled via a rotary mechanism of the central stalk subunits to proton translocation. This protein is part of the stalk that links CF(0) to CF(1). It either transmits conformational changes from CF(0) to CF(1) or is implicated in proton conduction. This Chromobacterium violaceum (strain ATCC 12472 / DSM 30191 / JCM 1249 / CCUG 213 / NBRC 12614 / NCIMB 9131 / NCTC 9757 / MK) protein is ATP synthase subunit delta.